Consider the following 264-residue polypeptide: tRNA (guanine-N(1)-)-methyltransferase (264 aa).

Position 149–154 (149–154) interacts with S-adenosyl-L-methionine; it reads IGDYVL.

Belongs to the RNA methyltransferase TrmD family. As to quaternary structure, homodimer.

Its subcellular location is the cytoplasm. The catalysed reaction is guanosine(37) in tRNA + S-adenosyl-L-methionine = N(1)-methylguanosine(37) in tRNA + S-adenosyl-L-homocysteine + H(+). Functionally, specifically methylates guanosine-37 in various tRNAs. This is tRNA (guanine-N(1)-)-methyltransferase from Methylobacillus flagellatus (strain ATCC 51484 / DSM 6875 / VKM B-1610 / KT).